Reading from the N-terminus, the 126-residue chain is Large ribosomal subunit protein bL12 (126 aa).

It belongs to the bacterial ribosomal protein bL12 family. As to quaternary structure, homodimer. Part of the ribosomal stalk of the 50S ribosomal subunit. Forms a multimeric L10(L12)X complex, where L10 forms an elongated spine to which 2 to 4 L12 dimers bind in a sequential fashion. Binds GTP-bound translation factors.

Its function is as follows. Forms part of the ribosomal stalk which helps the ribosome interact with GTP-bound translation factors. Is thus essential for accurate translation. The polypeptide is Large ribosomal subunit protein bL12 (Legionella pneumophila (strain Paris)).